The chain runs to 230 residues: Probable cobalt-precorrin-2 C(20)-methyltransferase (230 aa).

This sequence belongs to the precorrin methyltransferase family.

The catalysed reaction is Co-precorrin-2 + S-adenosyl-L-methionine = Co-precorrin-3 + S-adenosyl-L-homocysteine + H(+). It functions in the pathway cofactor biosynthesis; adenosylcobalamin biosynthesis; cob(II)yrinate a,c-diamide from sirohydrochlorin (anaerobic route): step 2/10. Methylates cobalt-precorrin-2 at the C-20 position to produce cobalt-precorrin-3A in the anaerobic cobalamin biosynthesis pathway. This is Probable cobalt-precorrin-2 C(20)-methyltransferase (cbiL) from Methanocaldococcus jannaschii (strain ATCC 43067 / DSM 2661 / JAL-1 / JCM 10045 / NBRC 100440) (Methanococcus jannaschii).